Here is a 350-residue protein sequence, read N- to C-terminus: Probable flap endonuclease 1 homolog (350 aa).

An N-domain region spans residues 1-95 (MGITKLAHLI…AVLEKRAQST (95 aa)). D34 is a Mg(2+) binding site. A DNA-binding site is contributed by R61. Residues D77, E130, E132, D151, and D153 each contribute to the Mg(2+) site. An I-domain region spans residues 110 to 223 (NQECLRLLHL…SRALKLIKEH (114 aa)). E130 serves as a coordination point for DNA. DNA is bound by residues G201 and D203. Mg(2+) is bound at residue D203. Residues 317–325 (RQSRLEDFF) are interaction with PCNA.

It belongs to the XPG/RAD2 endonuclease family. FEN1 subfamily. As to quaternary structure, interacts with PCNA. Three molecules of fen1 bind to one PCNA trimer with each molecule binding to one PCNA monomer. PCNA stimulates the nuclease activity without altering cleavage specificity. Requires Mg(2+) as cofactor. Post-translationally, phosphorylated. Phosphorylation upon DNA damage induces relocalization to the nuclear plasma.

It is found in the nucleus. Its subcellular location is the nucleolus. The protein resides in the nucleoplasm. The protein localises to the mitochondrion. Its function is as follows. Structure-specific nuclease with 5'-flap endonuclease and 5'-3' exonuclease activities involved in DNA replication and repair. During DNA replication, cleaves the 5'-overhanging flap structure that is generated by displacement synthesis when DNA polymerase encounters the 5'-end of a downstream Okazaki fragment. It enters the flap from the 5'-end and then tracks to cleave the flap base, leaving a nick for ligation. Also involved in the long patch base excision repair (LP-BER) pathway, by cleaving within the apurinic/apyrimidinic (AP) site-terminated flap. Acts as a genome stabilization factor that prevents flaps from equilibrating into structures that lead to duplications and deletions. Also possesses 5'-3' exonuclease activity on nicked or gapped double-stranded DNA, and exhibits RNase H activity. Also involved in replication and repair of rDNA and in repairing mitochondrial DNA. In Danio rerio (Zebrafish), this protein is Probable flap endonuclease 1 homolog.